We begin with the raw amino-acid sequence, 197 residues long: Large ribosomal subunit protein bL25 (197 aa).

It belongs to the bacterial ribosomal protein bL25 family. CTC subfamily. As to quaternary structure, part of the 50S ribosomal subunit; part of the 5S rRNA/L5/L18/L25 subcomplex. Contacts the 5S rRNA. Binds to the 5S rRNA independently of L5 and L18.

In terms of biological role, this is one of the proteins that binds to the 5S RNA in the ribosome where it forms part of the central protuberance. The protein is Large ribosomal subunit protein bL25 of Citrifermentans bemidjiense (strain ATCC BAA-1014 / DSM 16622 / JCM 12645 / Bem) (Geobacter bemidjiensis).